The chain runs to 317 residues: Insulin-like growth factor-binding protein 2 (317 aa).

The first 33 residues, 1-33, serve as a signal peptide directing secretion; the sequence is MQPRLGGPALLLLPPLLLLLLLGAGGGDCGARA. Positions 35–126 constitute an IGFBP N-terminal domain; sequence VLFRCPPCTP…VHGEGTCEKH (92 aa). 6 cysteine pairs are disulfide-bonded: Cys-39–Cys-76, Cys-42–Cys-78, Cys-50–Cys-79, Cys-68–Cys-82, Cys-90–Cys-103, and Cys-97–Cys-123. Disordered stretches follow at residues 126-146 and 190-218; these read HGDAEYSASPEQVADNGEEHS and QHRQMGKGGKHHLGLEEPKKLRPPPARTP. Positions 216 to 298 constitute a Thyroglobulin type-1 domain; it reads RTPCQQELDQ…APTIRGDPEC (83 aa). Cystine bridges form between Cys-219/Cys-253, Cys-264/Cys-275, and Cys-277/Cys-298. The Cell attachment site motif lies at 293 to 295; sequence RGD.

In terms of assembly, interacts with IGF1. Interacts with IGF2. Interacts (via RGD motif) with integrin alpha5/ITGA5; this interaction induces cell migration, adhesion or apoptosis according to the context. Interacts with PTPRB; this interaction leads to PTPRB dimerization and inactivation. Cleaved by MMP9 leading to release of free IGF2 from IGFBP2-IGF2 complex, which contributes to enhance the motility and the growth of astrocytes. In terms of processing, O-glycosylated.

Its subcellular location is the secreted. Its function is as follows. Multifunctional protein that plays a critical role in regulating the availability of IGFs such as IGF1 and IGF2 to their receptors and thereby regulates IGF-mediated cellular processes including proliferation, differentiation, and apoptosis in a cell-type specific manner. Functions coordinately with receptor protein tyrosine phosphatase beta/PTPRB and the IGF1 receptor to regulate IGF1-mediated signaling by stimulating the phosphorylation of PTEN leading to its inactivation and AKT1 activation. Plays a positive role in cell migration via interaction with integrin alpha5/ITGA5 through an RGD motif. Additionally, interaction with ITGA5/ITGB1 enhances the adhesion of endothelial progenitor cells to endothelial cells. Upon mitochondrial damage, facilitates apoptosis with ITGA5 of podocytes, and then activates the phosphorylation of focal adhesion kinase (FAK)-mediated mitochondrial injury. The protein is Insulin-like growth factor-binding protein 2 (IGFBP2) of Bos taurus (Bovine).